Here is a 364-residue protein sequence, read N- to C-terminus: tRNA 2-selenouridine synthase (364 aa).

The 124-residue stretch at 14 to 137 (LLADTPLIDV…LRQTAIQATW (124 aa)) folds into the Rhodanese domain. Residue Cys-97 is the S-selanylcysteine intermediate of the active site.

Belongs to the SelU family. Monomer.

It catalyses the reaction 5-methylaminomethyl-2-thiouridine(34) in tRNA + selenophosphate + (2E)-geranyl diphosphate + H2O + H(+) = 5-methylaminomethyl-2-selenouridine(34) in tRNA + (2E)-thiogeraniol + phosphate + diphosphate. The enzyme catalyses 5-methylaminomethyl-2-thiouridine(34) in tRNA + (2E)-geranyl diphosphate = 5-methylaminomethyl-S-(2E)-geranyl-thiouridine(34) in tRNA + diphosphate. It carries out the reaction 5-methylaminomethyl-S-(2E)-geranyl-thiouridine(34) in tRNA + selenophosphate + H(+) = 5-methylaminomethyl-2-(Se-phospho)selenouridine(34) in tRNA + (2E)-thiogeraniol. The catalysed reaction is 5-methylaminomethyl-2-(Se-phospho)selenouridine(34) in tRNA + H2O = 5-methylaminomethyl-2-selenouridine(34) in tRNA + phosphate. Functionally, involved in the post-transcriptional modification of the uridine at the wobble position (U34) of tRNA(Lys), tRNA(Glu) and tRNA(Gln). Catalyzes the conversion of 2-thiouridine (S2U-RNA) to 2-selenouridine (Se2U-RNA). Acts in a two-step process involving geranylation of 2-thiouridine (S2U) to S-geranyl-2-thiouridine (geS2U) and subsequent selenation of the latter derivative to 2-selenouridine (Se2U) in the tRNA chain. This is tRNA 2-selenouridine synthase from Salmonella dublin (strain CT_02021853).